Reading from the N-terminus, the 374-residue chain is Anthranilate O-methyltransferase 2 (374 aa).

Tyr-18 is an S-adenosyl-L-homocysteine binding site. Gln-25 is a binding site for anthranilate. 6 residues coordinate S-adenosyl-L-homocysteine: Cys-59, Asn-64, Asp-98, Leu-99, Ser-142, and Tyr-143. Trp-164 lines the anthranilate pocket. The Mg(2+) site is built by Glu-261 and Phe-263.

This sequence belongs to the methyltransferase superfamily. Type-7 methyltransferase family. SABATH subfamily.

It carries out the reaction anthranilate + S-adenosyl-L-methionine = O-methyl anthranilate + S-adenosyl-L-homocysteine. Methyltransferase involved in the biosynthesis of methyl anthranilate in response to stresses. Utilizes anthranilic acid as substrate. Produces exclusively the O-methyl ester. This chain is Anthranilate O-methyltransferase 2 (AAMT2), found in Zea mays (Maize).